We begin with the raw amino-acid sequence, 197 residues long: uncharacterized protein (197 aa).

Residues 1-10 are compositionally biased toward polar residues; that stretch reads MKNNYTSLKS. Disordered regions lie at residues 1–46 and 54–73; these read MKNN…PPYS and LVPE…NVER. Positions 18 to 37 are enriched in basic and acidic residues; sequence LKTGHEIDLEKGPLPEHNSE. Residues 58 to 69 show a composition bias toward polar residues; it reads DSSTGPTETANP. 2 helical membrane-spanning segments follow: residues 83–105 and 120–142; these read NIYS…FTAW and AFFV…EPGL.

It belongs to the WTF family.

It is found in the endoplasmic reticulum membrane. This is an uncharacterized protein from Schizosaccharomyces pombe (strain 972 / ATCC 24843) (Fission yeast).